The following is a 194-amino-acid chain: Large ribosomal subunit protein bL12m (194 aa).

A mitochondrion-targeting transit peptide spans Met-1–Phe-33. Asn-34 carries an N-linked (GlcNAc...) asparagine glycan. Positions Ala-101 to Lys-120 are disordered. Residues Pro-105 to Gly-114 show a composition bias toward low complexity.

The protein belongs to the bacterial ribosomal protein bL12 family. Component of the mitochondrial large ribosomal subunit (mt-LSU). Mature yeast 74S mitochondrial ribosomes consist of a small (37S) and a large (54S) subunit. The 37S small subunit contains a 15S ribosomal RNA (15S mt-rRNA) and 34 different proteins. The 54S large subunit contains a 21S rRNA (21S mt-rRNA) and 46 different proteins. Post-translationally, N-glycosylated.

The protein resides in the mitochondrion. Component of the mitochondrial ribosome (mitoribosome), a dedicated translation machinery responsible for the synthesis of mitochondrial genome-encoded proteins, including at least some of the essential transmembrane subunits of the mitochondrial respiratory chain. The mitoribosomes are attached to the mitochondrial inner membrane and translation products are cotranslationally integrated into the membrane. This chain is Large ribosomal subunit protein bL12m (MNP1), found in Saccharomyces cerevisiae (strain ATCC 204508 / S288c) (Baker's yeast).